A 68-amino-acid polypeptide reads, in one-letter code: MAVPFRRTGKTAKRKRRTHYKLSNPALVLCKETNAFTLSHRVTKNSGYYKGKLILENKPSKAQKTTDN.

It belongs to the bacterial ribosomal protein bL32 family.

This Aster yellows witches'-broom phytoplasma (strain AYWB) protein is Large ribosomal subunit protein bL32.